The sequence spans 276 residues: Rhomboid protease GlpG (276 aa).

6 helical membrane passes run 94–114 (GPVTWVMMIACVVVFIAMQIL), 142–162 (ALMHFSLMHILFNLLWWWYLG), 169–189 (LGSGKLIVITLISALLSGYVQ), 192–212 (FSGPWFGGLSGVVYALMGYVW), 229–249 (LIIFALIWIVAGWFDLFGMSM), and 250–270 (ANGAHIAGLAVGLAMAFVDSL). Residue Ser-201 is the Nucleophile of the active site. His-254 is an active-site residue.

The protein belongs to the peptidase S54 family.

Its subcellular location is the cell inner membrane. It carries out the reaction Cleaves type-1 transmembrane domains using a catalytic dyad composed of serine and histidine that are contributed by different transmembrane domains.. Its function is as follows. Rhomboid-type serine protease that catalyzes intramembrane proteolysis. The sequence is that of Rhomboid protease GlpG from Escherichia fergusonii (strain ATCC 35469 / DSM 13698 / CCUG 18766 / IAM 14443 / JCM 21226 / LMG 7866 / NBRC 102419 / NCTC 12128 / CDC 0568-73).